A 131-amino-acid chain; its full sequence is Profilin-1 (131 aa).

The cysteines at positions 13 and 115 are disulfide-linked. Residues Arg81 to Thr97 carry the Involved in PIP2 interaction motif. Thr111 carries the post-translational modification Phosphothreonine.

It belongs to the profilin family. Occurs in many kinds of cells as a complex with monomeric actin in a 1:1 ratio.

It is found in the cytoplasm. The protein localises to the cytoskeleton. Its function is as follows. Binds to actin and affects the structure of the cytoskeleton. At high concentrations, profilin prevents the polymerization of actin, whereas it enhances it at low concentrations. By binding to PIP2, it inhibits the formation of IP3 and DG. In Phleum pratense (Common timothy), this protein is Profilin-1 (PRO1).